A 398-amino-acid chain; its full sequence is 4-hydroxy-3-methylbut-2-enyl diphosphate reductase (398 aa).

C66 contacts [4Fe-4S] cluster. H96 lines the (2E)-4-hydroxy-3-methylbut-2-enyl diphosphate pocket. A dimethylallyl diphosphate-binding site is contributed by H96. H96 contributes to the isopentenyl diphosphate binding site. C157 contributes to the [4Fe-4S] cluster binding site. A (2E)-4-hydroxy-3-methylbut-2-enyl diphosphate-binding site is contributed by H185. H185 is a binding site for dimethylallyl diphosphate. H185 serves as a coordination point for isopentenyl diphosphate. E187 acts as the Proton donor in catalysis. Position 250 (T250) interacts with (2E)-4-hydroxy-3-methylbut-2-enyl diphosphate. C288 is a binding site for [4Fe-4S] cluster. (2E)-4-hydroxy-3-methylbut-2-enyl diphosphate is bound by residues S317, S318, N319, and S380. Positions 317, 318, 319, and 380 each coordinate dimethylallyl diphosphate. Residues S317, S318, N319, and S380 each coordinate isopentenyl diphosphate.

This sequence belongs to the IspH family. Requires [4Fe-4S] cluster as cofactor.

It carries out the reaction isopentenyl diphosphate + 2 oxidized [2Fe-2S]-[ferredoxin] + H2O = (2E)-4-hydroxy-3-methylbut-2-enyl diphosphate + 2 reduced [2Fe-2S]-[ferredoxin] + 2 H(+). It catalyses the reaction dimethylallyl diphosphate + 2 oxidized [2Fe-2S]-[ferredoxin] + H2O = (2E)-4-hydroxy-3-methylbut-2-enyl diphosphate + 2 reduced [2Fe-2S]-[ferredoxin] + 2 H(+). It participates in isoprenoid biosynthesis; dimethylallyl diphosphate biosynthesis; dimethylallyl diphosphate from (2E)-4-hydroxy-3-methylbutenyl diphosphate: step 1/1. It functions in the pathway isoprenoid biosynthesis; isopentenyl diphosphate biosynthesis via DXP pathway; isopentenyl diphosphate from 1-deoxy-D-xylulose 5-phosphate: step 6/6. In terms of biological role, catalyzes the conversion of 1-hydroxy-2-methyl-2-(E)-butenyl 4-diphosphate (HMBPP) into a mixture of isopentenyl diphosphate (IPP) and dimethylallyl diphosphate (DMAPP). Acts in the terminal step of the DOXP/MEP pathway for isoprenoid precursor biosynthesis. This chain is 4-hydroxy-3-methylbut-2-enyl diphosphate reductase, found in Prochlorococcus marinus subsp. pastoris (strain CCMP1986 / NIES-2087 / MED4).